The following is a 418-amino-acid chain: Serine hydroxymethyltransferase (418 aa).

(6S)-5,6,7,8-tetrahydrofolate is bound by residues Leu120 and 124-126 (GHL). Lys229 carries the N6-(pyridoxal phosphate)lysine modification. 353–355 (SPF) provides a ligand contact to (6S)-5,6,7,8-tetrahydrofolate.

This sequence belongs to the SHMT family. As to quaternary structure, homodimer. Pyridoxal 5'-phosphate is required as a cofactor.

Its subcellular location is the cytoplasm. It catalyses the reaction (6R)-5,10-methylene-5,6,7,8-tetrahydrofolate + glycine + H2O = (6S)-5,6,7,8-tetrahydrofolate + L-serine. The protein operates within one-carbon metabolism; tetrahydrofolate interconversion. Its pathway is amino-acid biosynthesis; glycine biosynthesis; glycine from L-serine: step 1/1. Its function is as follows. Catalyzes the reversible interconversion of serine and glycine with tetrahydrofolate (THF) serving as the one-carbon carrier. This reaction serves as the major source of one-carbon groups required for the biosynthesis of purines, thymidylate, methionine, and other important biomolecules. Also exhibits THF-independent aldolase activity toward beta-hydroxyamino acids, producing glycine and aldehydes, via a retro-aldol mechanism. The protein is Serine hydroxymethyltransferase of Psychrobacter arcticus (strain DSM 17307 / VKM B-2377 / 273-4).